Here is a 372-residue protein sequence, read N- to C-terminus: Putative aminopeptidase SgcX (372 aa).

Residues histidine 67 and aspartate 180 each coordinate a divalent metal cation. The active-site Proton acceptor is glutamate 212. Residues glutamate 213, aspartate 235, and histidine 329 each coordinate a divalent metal cation.

Belongs to the peptidase M42 family. Requires a divalent metal cation as cofactor.

This chain is Putative aminopeptidase SgcX (sgcX), found in Salmonella typhimurium (strain LT2 / SGSC1412 / ATCC 700720).